The primary structure comprises 200 residues: Protein DMP7 (200 aa).

The next 4 membrane-spanning stretches (helical) occupy residues 37–57 (LSNL…PVLT), 69–89 (WLTC…SFTD), 129–149 (ILDF…SMFD), and 167–187 (ILTS…LAFP).

Belongs to the plant DMP1 protein family. Expressed in leaves, stems, flowers, siliques and roots, especially in the vasculature.

It localises to the endoplasmic reticulum membrane. Involved in membrane remodeling. The chain is Protein DMP7 from Arabidopsis thaliana (Mouse-ear cress).